The primary structure comprises 139 residues: ATP synthase epsilon chain (139 aa).

It belongs to the ATPase epsilon chain family. F-type ATPases have 2 components, CF(1) - the catalytic core - and CF(0) - the membrane proton channel. CF(1) has five subunits: alpha(3), beta(3), gamma(1), delta(1), epsilon(1). CF(0) has three main subunits: a, b and c.

It localises to the cell inner membrane. In terms of biological role, produces ATP from ADP in the presence of a proton gradient across the membrane. The chain is ATP synthase epsilon chain from Erwinia tasmaniensis (strain DSM 17950 / CFBP 7177 / CIP 109463 / NCPPB 4357 / Et1/99).